The sequence spans 430 residues: Adenylosuccinate synthetase (430 aa).

GTP contacts are provided by residues Gly-13 to Lys-19 and Gly-41 to Thr-43. Asp-14 acts as the Proton acceptor in catalysis. The Mg(2+) site is built by Asp-14 and Gly-41. IMP is bound by residues Asp-14–Lys-17, Asn-39–His-42, Thr-130, Arg-144, Gln-225, Thr-240, and Arg-304. Catalysis depends on His-42, which acts as the Proton donor. Ala-300–Arg-306 lines the substrate pocket. GTP-binding positions include Arg-306, Lys-332–Asp-334, and Ser-414–Gly-416.

The protein belongs to the adenylosuccinate synthetase family. Homodimer. The cofactor is Mg(2+).

The protein localises to the cytoplasm. The enzyme catalyses IMP + L-aspartate + GTP = N(6)-(1,2-dicarboxyethyl)-AMP + GDP + phosphate + 2 H(+). It participates in purine metabolism; AMP biosynthesis via de novo pathway; AMP from IMP: step 1/2. Functionally, plays an important role in the de novo pathway of purine nucleotide biosynthesis. Catalyzes the first committed step in the biosynthesis of AMP from IMP. The sequence is that of Adenylosuccinate synthetase from Pseudomonas paraeruginosa (strain DSM 24068 / PA7) (Pseudomonas aeruginosa (strain PA7)).